The primary structure comprises 273 residues: GTP cyclohydrolase MptA (273 aa).

This sequence belongs to the GTP cyclohydrolase IV family. In terms of assembly, homodimer. Fe(2+) serves as cofactor.

The catalysed reaction is GTP + H2O = 7,8-dihydroneopterin 2',3'-cyclic phosphate + formate + diphosphate + H(+). It participates in cofactor biosynthesis; 5,6,7,8-tetrahydromethanopterin biosynthesis. In terms of biological role, converts GTP to 7,8-dihydro-D-neopterin 2',3'-cyclic phosphate, the first intermediate in the biosynthesis of coenzyme methanopterin. The protein is GTP cyclohydrolase MptA of Picrophilus torridus (strain ATCC 700027 / DSM 9790 / JCM 10055 / NBRC 100828 / KAW 2/3).